The chain runs to 514 residues: ATP synthase subunit alpha (514 aa).

170-177 is an ATP binding site; the sequence is GDRQIGKS.

The protein belongs to the ATPase alpha/beta chains family. F-type ATPases have 2 components, CF(1) - the catalytic core - and CF(0) - the membrane proton channel. CF(1) has five subunits: alpha(3), beta(3), gamma(1), delta(1), epsilon(1). CF(0) has three main subunits: a(1), b(2) and c(9-12). The alpha and beta chains form an alternating ring which encloses part of the gamma chain. CF(1) is attached to CF(0) by a central stalk formed by the gamma and epsilon chains, while a peripheral stalk is formed by the delta and b chains.

The protein localises to the cell inner membrane. It catalyses the reaction ATP + H2O + 4 H(+)(in) = ADP + phosphate + 5 H(+)(out). Produces ATP from ADP in the presence of a proton gradient across the membrane. The alpha chain is a regulatory subunit. This is ATP synthase subunit alpha from Chromohalobacter salexigens (strain ATCC BAA-138 / DSM 3043 / CIP 106854 / NCIMB 13768 / 1H11).